The sequence spans 358 residues: Purine permease 2 (358 aa).

10 consecutive transmembrane segments (helical) span residues 6–26 (VLVIINCIFLAIGNCGGPLMM), 37–57 (IWFPSFLQTVGCPLIFFPLLL), 74–94 (FFLMKPPLFIAAIVVGLLVGF), 110–130 (TASLIISAQLGFTALFAFFMV), 134–154 (FTPFTINAIVLLTGGAVVLAL), 170–190 (VVGFIMTLGAALLYGFILPLV), 209–229 (FQMVLCFAATCVCLVGMLAAG), 262–282 (VIVFTAIIWQAFFVGAIGLIF), 288–308 (VSGIMVSALLPVTVILAVICF), and 312–332 (FQAGKGVALALSLWGSVSYFY). The 109-residue stretch at 46–154 (VGCPLIFFPL…LTGGAVVLAL (109 aa)) folds into the EamA domain.

This sequence belongs to the purine permeases (TC 2.A.7.14) family. Expressed in the vascular system of leaves. Restricted to the phloem. Expressed in flowers and roots and not detected in stems.

It is found in the membrane. With respect to regulation, competitive inhibition of adenine transport by isopentenyladenine, kinetin, benzylaminopurine, trans- and cis-zeatin and trans-zeatin riboside. In terms of biological role, mediates adenine transport. May be involved in the uptake of cytokinin analogs. The chain is Purine permease 2 (PUP2) from Arabidopsis thaliana (Mouse-ear cress).